A 188-amino-acid chain; its full sequence is Ubiquitin-like protein 4B (188 aa).

One can recognise a Ubiquitin-like domain in the interval 1–76 (MFLTVKLLLG…INVIMRPPED (76 aa)). The tract at residues 146–188 (EEKEAPAVASELEQNNGGGGGGGGTGGEGGGKKEEEEGEEADQ) is disordered. The span at 161–174 (NGGGGGGGGTGGEG) shows a compositional bias: gly residues.

In terms of tissue distribution, expressed specifically in post-meiotic male germ cells of the testis. Abundantly expressed in stage 14-16 spermatids.

It is found in the cytoplasm. In Mus musculus (Mouse), this protein is Ubiquitin-like protein 4B (Ubl4b).